The primary structure comprises 329 residues: DNA-directed RNA polymerase subunit alpha (329 aa).

The interval 1 to 235 (MQGSVTEFLK…EQLDAFVDLR (235 aa)) is alpha N-terminal domain (alpha-NTD). The interval 249–329 (FDPILLRPVD…NWPPASIAED (81 aa)) is alpha C-terminal domain (alpha-CTD).

It belongs to the RNA polymerase alpha chain family. In terms of assembly, homodimer. The RNAP catalytic core consists of 2 alpha, 1 beta, 1 beta' and 1 omega subunit. When a sigma factor is associated with the core the holoenzyme is formed, which can initiate transcription.

It catalyses the reaction RNA(n) + a ribonucleoside 5'-triphosphate = RNA(n+1) + diphosphate. In terms of biological role, DNA-dependent RNA polymerase catalyzes the transcription of DNA into RNA using the four ribonucleoside triphosphates as substrates. The polypeptide is DNA-directed RNA polymerase subunit alpha (Mannheimia succiniciproducens (strain KCTC 0769BP / MBEL55E)).